The following is a 350-amino-acid chain: Flap endonuclease 1 (350 aa).

The tract at residues 1–102 (MGVTELGKLI…IEIEKRRRVR (102 aa)) is N-domain. Asp31, Asp84, Glu156, Glu158, Asp177, Asp179, and Asp241 together coordinate Mg(2+). The interval 120–263 (EARKYAQRAL…RALRLIQEYG (144 aa)) is I-domain.

The protein belongs to the XPG/RAD2 endonuclease family. FEN1 subfamily. In terms of assembly, interacts with PCNA. PCNA stimulates the nuclease activity without altering cleavage specificity. The cofactor is Mg(2+).

Functionally, structure-specific nuclease with 5'-flap endonuclease and 5'-3' exonuclease activities involved in DNA replication and repair. During DNA replication, cleaves the 5'-overhanging flap structure that is generated by displacement synthesis when DNA polymerase encounters the 5'-end of a downstream Okazaki fragment. Binds the unpaired 3'-DNA end and kinks the DNA to facilitate 5' cleavage specificity. Cleaves one nucleotide into the double-stranded DNA from the junction in flap DNA, leaving a nick for ligation. Also involved in the base excision repair (BER) pathway. Acts as a genome stabilization factor that prevents flaps from equilibrating into structures that lead to duplications and deletions. Also possesses 5'-3' exonuclease activity on nicked or gapped double-stranded DNA. The polypeptide is Flap endonuclease 1 (Caldivirga maquilingensis (strain ATCC 700844 / DSM 13496 / JCM 10307 / IC-167)).